The following is a 79-amino-acid chain: Acyl carrier protein (79 aa).

One can recognise a Carrier domain in the interval 2-77; the sequence is DNIEQRVKKI…QAIDYARANV (76 aa). An O-(pantetheine 4'-phosphoryl)serine modification is found at S37.

This sequence belongs to the acyl carrier protein (ACP) family. 4'-phosphopantetheine is transferred from CoA to a specific serine of apo-ACP by AcpS. This modification is essential for activity because fatty acids are bound in thioester linkage to the sulfhydryl of the prosthetic group.

The protein localises to the cytoplasm. It participates in lipid metabolism; fatty acid biosynthesis. Functionally, carrier of the growing fatty acid chain in fatty acid biosynthesis. The protein is Acyl carrier protein of Burkholderia cenocepacia (strain HI2424).